The following is a 208-amino-acid chain: FMN-dependent NADH:quinone oxidoreductase (208 aa).

FMN-binding positions include 17 to 19, 99 to 102, and 143 to 146; these read SNS, MWNL, and SRGG.

It belongs to the azoreductase type 1 family. Homodimer. Requires FMN as cofactor.

The catalysed reaction is 2 a quinone + NADH + H(+) = 2 a 1,4-benzosemiquinone + NAD(+). The enzyme catalyses N,N-dimethyl-1,4-phenylenediamine + anthranilate + 2 NAD(+) = 2-(4-dimethylaminophenyl)diazenylbenzoate + 2 NADH + 2 H(+). Its function is as follows. Quinone reductase that provides resistance to thiol-specific stress caused by electrophilic quinones. In terms of biological role, also exhibits azoreductase activity. Catalyzes the reductive cleavage of the azo bond in aromatic azo compounds to the corresponding amines. The protein is FMN-dependent NADH:quinone oxidoreductase of Staphylococcus haemolyticus (strain JCSC1435).